The chain runs to 644 residues: Threonine--tRNA ligase (644 aa).

The TGS domain occupies 1-61 (MNVSIEGQML…DGTTTIEPVY (61 aa)). Positions 241–532 (DHRKLGQQLD…LIEQYAGAFP (292 aa)) are catalytic. Positions 333, 384, and 509 each coordinate Zn(2+).

Belongs to the class-II aminoacyl-tRNA synthetase family. Homodimer. Zn(2+) serves as cofactor.

It localises to the cytoplasm. It catalyses the reaction tRNA(Thr) + L-threonine + ATP = L-threonyl-tRNA(Thr) + AMP + diphosphate + H(+). In terms of biological role, catalyzes the attachment of threonine to tRNA(Thr) in a two-step reaction: L-threonine is first activated by ATP to form Thr-AMP and then transferred to the acceptor end of tRNA(Thr). Also edits incorrectly charged L-seryl-tRNA(Thr). This chain is Threonine--tRNA ligase, found in Nitratidesulfovibrio vulgaris (strain ATCC 29579 / DSM 644 / CCUG 34227 / NCIMB 8303 / VKM B-1760 / Hildenborough) (Desulfovibrio vulgaris).